A 267-amino-acid chain; its full sequence is Sorbitol-6-phosphate 2-dehydrogenase (267 aa).

9–38 (DNVIIVTGGASGIGLAIVDELLSQGAHVQM) contributes to the NAD(+) binding site. A substrate-binding site is contributed by S147. Y160 acts as the Proton acceptor in catalysis.

The protein belongs to the short-chain dehydrogenases/reductases (SDR) family. In terms of assembly, homotetramer.

The catalysed reaction is D-sorbitol 6-phosphate + NAD(+) = beta-D-fructose 6-phosphate + NADH + H(+). The protein operates within carbohydrate metabolism; D-sorbitol degradation; D-fructose 6-phosphate from D-sorbitol 6-phosphate: step 1/1. The polypeptide is Sorbitol-6-phosphate 2-dehydrogenase (sorD) (Klebsiella pneumoniae).